The following is a 155-amino-acid chain: Nucleosome assembly protein 1-like 5 (155 aa).

The span at 1-16 (MADPEKQGPAESRAED) shows a compositional bias: basic and acidic residues. Residues 1-60 (MADPEKQGPAESRAEDEVMEGAQGGEDAATGDSATAPAAEEPQAPAENAPKPKNDFIESL) form a disordered region. Positions 27-49 (DAATGDSATAPAAEEPQAPAENA) are enriched in low complexity. Residues 68–94 (VLALKKLQKRCDKIEAKFDKEFQALEK) are a coiled coil. The disordered stretch occupies residues 119–155 (WTLEGEDDEDDEEEEDEEEEEEEAAAGATGGPDSAEK). A compositionally biased stretch (acidic residues) spans 122–142 (EGEDDEDDEEEEDEEEEEEEA).

The protein belongs to the nucleosome assembly protein (NAP) family.

It localises to the nucleus. In Rattus norvegicus (Rat), this protein is Nucleosome assembly protein 1-like 5 (Nap1l5).